The sequence spans 363 residues: mRNA decay activator protein ZFP36L2-A (363 aa).

An RNA-binding motif is present at residues 131-136 (RYKTEL). C3H1-type zinc fingers lie at residues 131–159 (RYKT…HGFH) and 169–197 (KYKT…HNAE). The tract at residues 148-189 (YGEKCQFAHGFHELRSLTRHPKYKTELCRTFHTIGFCPYGPR) is RNA-binding. The segment at 308 to 349 (ESPVFDAPPSPPDSLSDRDSYLSGSLSSGSLSGSDSPTLDSN) is disordered. Over residues 328–347 (YLSGSLSSGSLSGSDSPTLD) the composition is skewed to low complexity.

Phosphorylated. As to expression, widely expressed in adults.

It localises to the nucleus. It is found in the cytoplasm. Functionally, zinc-finger RNA-binding protein that destabilizes several cytoplasmic AU-rich element (ARE)-containing mRNA transcripts by promoting their poly(A) tail removal or deadenylation, and hence provide a mechanism for attenuating protein synthesis. Acts as a 3'-untranslated region (UTR) ARE mRNA-binding adapter protein to communicate signaling events to the mRNA decay machinery. Functions by recruiting the CCR4-NOT deadenylase complex and probably other components of the cytoplasmic RNA decay machinery to the bound ARE-containing mRNAs, and hence promotes ARE-mediated mRNA deadenylation and decay processes. Binds to 3'-UTR ARE of numerous mRNAs. Also induces the degradation of ARE-containing mRNAs even in absence of poly(A) tail. Required for tubulogenesis during pronephros development. The sequence is that of mRNA decay activator protein ZFP36L2-A (zfp36l2-A) from Xenopus laevis (African clawed frog).